We begin with the raw amino-acid sequence, 271 residues long: Insulin-like growth factor-binding protein 5 (271 aa).

The first 19 residues, 1–19 (MVISVVLLLLAACAVPAQG), serve as a signal peptide directing secretion. The IGFBP N-terminal domain occupies 22-102 (SFVHCEPCDE…LHGRGVCLNE (81 aa)). 6 disulfides stabilise this stretch: cysteine 26–cysteine 52, cysteine 29–cysteine 54, cysteine 37–cysteine 55, cysteine 44–cysteine 58, cysteine 66–cysteine 79, and cysteine 73–cysteine 99. Residues 109-121 (TKIERDSREHEEP) show a composition bias toward basic and acidic residues. The interval 109 to 129 (TKIERDSREHEEPTTSEMAEE) is disordered. The residue at position 115 (serine 115) is a Phosphoserine. The Thyroglobulin type-1 domain maps to 188–262 (QGPCRRHMEA…MEYVDGDFQC (75 aa)). Disulfide bonds link cysteine 191–cysteine 218, cysteine 229–cysteine 240, and cysteine 242–cysteine 262.

In terms of assembly, interacts with IGF1; this interaction enhances the growth stimulatory effects of IGF1 on fibroblasts. Interacts with CAV1; this interaction allows trafficking of IGFBP5 from the plasma membrane to the nucleus. Interacts with NCL; this interaction is necessary for IGFBP5 localization to the nucleus. Mostly in kidney.

It is found in the secreted. It localises to the cytoplasm. The protein localises to the nucleus. Its function is as follows. Multifunctional protein that plays a critical role in regulating the availability of IGFs to their receptors and thereby regulates IGF-mediated cellular processes including proliferation, differentiation, and apoptosis in a cell-type specific manner. Increases the cell proliferation of osteoblasts, intestinal smooth muscle cells and neuroblastoma cells. Enhances adhesion and survival of epithelial cells but decreases adhesion of mesenchymal cells. Once secreted, acts as a major mediator of mTORC1-dependent feedback inhibition of IGF1 signaling. Also plays a role in the induction of extracellular matrix (ECM) production and deposition independently of its nuclear translocation and binding to IGFs. Acts itself as a growth factor that can act independently of IGFs to regulate bone formation. Acts as a ligand for the ROR1 receptor which triggers formation of ROR1/HER2 heterodimer to enhance CREB oncogenic signaling. The sequence is that of Insulin-like growth factor-binding protein 5 (Igfbp5) from Rattus norvegicus (Rat).